Consider the following 197-residue polypeptide: Dephospho-CoA kinase (197 aa).

One can recognise a DPCK domain in the interval 2–197; sequence IIGITGGIAS…SALLLLANPR (196 aa). An ATP-binding site is contributed by 10 to 15; it reads ASGKST.

It belongs to the CoaE family.

The protein resides in the cytoplasm. The enzyme catalyses 3'-dephospho-CoA + ATP = ADP + CoA + H(+). The protein operates within cofactor biosynthesis; coenzyme A biosynthesis; CoA from (R)-pantothenate: step 5/5. Catalyzes the phosphorylation of the 3'-hydroxyl group of dephosphocoenzyme A to form coenzyme A. The polypeptide is Dephospho-CoA kinase (Streptococcus pyogenes serotype M1).